The primary structure comprises 983 residues: Probable beta-galactosidase C (983 aa).

Positions 1 to 23 (MRIFSFLFLLLLGILTGQGLVSG) are cleaved as a signal peptide. Substrate-binding residues include Tyr-82, Asn-127, Ala-128, Glu-129, and Asn-187. Residue Glu-188 is the Proton donor of the active site. Asn-197 carries an N-linked (GlcNAc...) asparagine glycan. A substrate-binding site is contributed by Tyr-251. A disulfide bridge connects residues Cys-257 and Cys-304. The N-linked (GlcNAc...) asparagine glycan is linked to Asn-276. Glu-287 (nucleophile) is an active-site residue. Substrate is bound at residue Tyr-353. Asn-391, Asn-434, Asn-466, Asn-516, Asn-601, Asn-676, Asn-714, Asn-719, Asn-758, and Asn-804 each carry an N-linked (GlcNAc...) asparagine glycan.

It belongs to the glycosyl hydrolase 35 family.

It is found in the secreted. It catalyses the reaction Hydrolysis of terminal non-reducing beta-D-galactose residues in beta-D-galactosides.. Its function is as follows. Cleaves beta-linked terminal galactosyl residues from gangliosides, glycoproteins, and glycosaminoglycans. This Aspergillus fumigatus (strain CBS 144.89 / FGSC A1163 / CEA10) (Neosartorya fumigata) protein is Probable beta-galactosidase C (lacC).